The sequence spans 448 residues: Tubulin beta chain (448 aa).

GTP contacts are provided by Gln-11, Glu-69, Ser-138, Gly-142, Thr-143, Gly-144, Asn-204, and Asn-226. Glu-69 is a binding site for Mg(2+).

The protein belongs to the tubulin family. As to quaternary structure, dimer of alpha and beta chains. A typical microtubule is a hollow water-filled tube with an outer diameter of 25 nm and an inner diameter of 15 nM. Alpha-beta heterodimers associate head-to-tail to form protofilaments running lengthwise along the microtubule wall with the beta-tubulin subunit facing the microtubule plus end conferring a structural polarity. Microtubules usually have 13 protofilaments but different protofilament numbers can be found in some organisms and specialized cells. Mg(2+) is required as a cofactor.

The protein localises to the cytoplasm. Its subcellular location is the cytoskeleton. Functionally, tubulin is the major constituent of microtubules, a cylinder consisting of laterally associated linear protofilaments composed of alpha- and beta-tubulin heterodimers. Microtubules grow by the addition of GTP-tubulin dimers to the microtubule end, where a stabilizing cap forms. Below the cap, tubulin dimers are in GDP-bound state, owing to GTPase activity of alpha-tubulin. The protein is Tubulin beta chain (TUB1) of Melampsora lini (Rust fungus).